We begin with the raw amino-acid sequence, 266 residues long: Enoyl-CoA hydratase EchA19 (266 aa).

The active site involves Glu120. At Lys135 the chain carries N6-succinyllysine. The active site involves Glu140. N6-succinyllysine is present on Lys142.

The protein belongs to the enoyl-CoA hydratase/isomerase family. In terms of assembly, homotrimer; substrate probably binds in elongated tunnels between the subunits. In terms of processing, succinylated in vitro at pH 8.1, succinylation reduces specific activity of the enzyme 5.5-fold; succinyl-CoA is a downstream by-product of cholesterol degradation. Can be de-succinylated in vitro by NAD-dependent protein deacylase (AC P9WGG3). Succinylation may be a negative feedback regulator of cholesterol metabolism.

The catalysed reaction is (22E)-3-oxochola-4,22-dien-24-oyl-CoA + H2O = (22R)-hydroxy-3-oxo-chol-4-ene-24-oyl-CoA. It functions in the pathway steroid metabolism; cholesterol degradation. Degradation of the cholesterol side chain involves 3 multistep beta-oxidation cycles, this may be involved in the second cycle. Hydrates 3-OCDO-CoA ((22E)-3-oxo-chol-4,22-dien-24-oyl-CoA) to make (22R)-HOCO-CoA (3-oxo-chol-4-ene-(22R)-hydroxy-24-oyl-CoA). Also acts on octenoyl-CoA. Not active on (E)-3-OCDS-CoA ((E)-3-oxocholest-4,24-dien-26-oyl-CoA) or 3-OPDC-CoA (3-oxo-4,17-pregnadiene-20-carboxyl-CoA). Hydrates the same substrate as ChsH3, but the 2 enzymes make different stereoisomers of the product. In Mycobacterium tuberculosis (strain ATCC 25618 / H37Rv), this protein is Enoyl-CoA hydratase EchA19.